The primary structure comprises 139 residues: Maximins 4/H3 type 4 (139 aa).

The first 18 residues, 1-18 (MNFKYIIAVSFLIASAYA), serve as a signal peptide directing secretion. Positions 19–43 (RSVQNDEQSLSQRDVLEEESLREIR) are excised as a propeptide. Asparagine amide is present on N70. The propeptide occupies 74-118 (TAEEHEVMKRLEAVMRDLDSLDHPEEASERETRGFNQDEIAKEKR). An Isoleucine amide modification is found at I138.

This sequence belongs to the bombinin family. In terms of tissue distribution, expressed by the skin glands.

It is found in the secreted. Functionally, maximin-4 shows antibacterial activity against both Gram-positive and Gram-negative bacteria. It also shows antimicrobial activity against the fungus C.albicans, but not against A.flavus nor P.uticale. It has little hemolytic activity. It does not possess a significant cytotoxicity against tumor cell lines. It does not possess a significant anti-HIV activity. In terms of biological role, maximin-H3 shows antibacterial activity against both Gram-positive and Gram-negative bacteria. It also shows antimicrobial activity against the fungus C.albicans. Shows strong hemolytic activity. The protein is Maximins 4/H3 type 4 of Bombina maxima (Giant fire-bellied toad).